A 508-amino-acid polypeptide reads, in one-letter code: Immunoglobulin G-binding protein A (508 aa).

An N-terminal signal peptide occupies residues 1 to 36 (MKKKNIYSIRKLGVGIASVTLGTLLISGGVTPAANA). The short motif at 7–18 (YSIRKLGVGIAS) is the YSIRK-G/S signaling motif element. The stretch at 37–92 (AQHDEAQQNAFYQVLNMPNLNADQRNGFIQSLKDDPSQSANVLGEAQKLNDSQAPK) is one Immunoglobulin-binding region E repeat. One copy of the Immunoglobulin-binding region D repeat lies at 93 to 153 (ADAQQNNFNK…KKLNESQAPK (61 aa)). The Immunoglobulin-binding region A repeat unit spans residues 154–211 (ADNNFNKEQQNAFYEILNMPNLNEEQRNGFIQSLKDDPSQSANLLSEAKKLNESQAPK). The stretch at 212–269 (ADNKFNKEQQNAFYEILHLPNLNEEQRNGFIQSLKDDPSQSANLLAEAKKLNDAQAPK) is one Immunoglobulin-binding region B repeat. One copy of the Immunoglobulin-binding region C repeat lies at 270–327 (ADNKFNKEQQNAFYEILHLPNLTEEQRNGFIQSLKDDPSVSKEILAEAKKLNDAQAPK). A compositionally biased stretch (basic and acidic residues) spans 318–412 (KKLNDAQAPK…GNKPGKEDGN (95 aa)). Disordered regions lie at residues 318 to 421 (KKLN…KPGD) and 459 to 479 (KKQP…ETGE). 10 repeat units span residues 333–340 (KPGKEDNN), 341–348 (KPGKEDNN), 349–356 (KPGKEDNN), 357–364 (KPGKEDGN), 365–372 (KPGKEDNK), 373–380 (KPGKEDGN), 381–388 (KPGKEDNK), 389–396 (KPGKEDGN), 397–404 (KPGKEDGN), and 405–412 (KPGKEDGN). Residues 333–412 (KPGKEDNNKP…GNKPGKEDGN (80 aa)) are 10 X 8 AA approximate tandem repeats. The LysM domain occupies 413–457 (GVHVVKPGDTVNDIAKANGTTADKIAADNKLADKNMIKPGQELVV). The LPXTG sorting signal motif lies at 474–478 (LPETG). Threonine 477 carries the post-translational modification Pentaglycyl murein peptidoglycan amidated threonine. Positions 478-508 (GEENPFIGTTVFGGLSLALGAALLAGRRREL) are cleaved as a propeptide — removed by sortase.

This sequence belongs to the immunoglobulin-binding protein SpA family. As to quaternary structure, interacts with host TNFRSF1A; this interaction leads to the stimulation of both surface expression and shedding of TNFRSF1A.

The protein localises to the secreted. Its subcellular location is the cell wall. In terms of biological role, plays a role in the inhibition of the host innate and adaptive immune responses. Possesses five immunoglobulin-binding domains that capture both the fragment crystallizable region (Fc region) and the Fab region (part of Ig that identifies antigen) of immunoglobulins. In turn, Staphylococcus aureus is protected from phagocytic killing via inhibition of Ig Fc region. In addition, the host elicited B-cell response is prevented due to a decrease of antibody-secreting cell proliferation that enter the bone marrow, thereby decreasing long-term antibody production. Inhibits osteogenesis by preventing osteoblast proliferation and expression of alkaline phosphatase, type I collagen, osteopontin and osteocalcin. Acts directly as a pro-inflammatory factor in the lung through its ability to bind and activate tumor necrosis factor alpha receptor 1/TNFRSF1A. The polypeptide is Immunoglobulin G-binding protein A (spa) (Staphylococcus aureus (strain Newman)).